The following is a 902-amino-acid chain: Nitrate reductase [NADPH] (902 aa).

C182 is a binding site for Mo-molybdopterin. A Cytochrome b5 heme-binding domain is found at 537-612 (LPLIFADEVA…LKKYCIGRCS (76 aa)). Residues H572 and H595 each contribute to the heme site. The region spanning 637–751 (RTKVPIVLIS…KGPLGHFTYY (115 aa)) is the FAD-binding FR-type domain. FAD-binding positions include 689–692 (RAYT), 708–712 (LIKVY), F713, 725–727 (LFS), and T778. 872–879 (CMCGPEGM) provides a ligand contact to NADP(+).

This sequence belongs to the nitrate reductase family. Homodimer. FAD is required as a cofactor. Heme serves as cofactor. Requires Mo-molybdopterin as cofactor.

It carries out the reaction nitrite + NADP(+) + H2O = nitrate + NADPH + H(+). Functionally, nitrate reductase is a key enzyme involved in the first step of nitrate assimilation in plants, fungi and bacteria. The protein is Nitrate reductase [NADPH] (NIAA) of Phytophthora infestans (Potato late blight agent).